A 227-amino-acid chain; its full sequence is Urease accessory protein UreF 2 (227 aa).

This sequence belongs to the UreF family. In terms of assembly, ureD, UreF and UreG form a complex that acts as a GTP-hydrolysis-dependent molecular chaperone, activating the urease apoprotein by helping to assemble the nickel containing metallocenter of UreC. The UreE protein probably delivers the nickel.

The protein localises to the cytoplasm. Its function is as follows. Required for maturation of urease via the functional incorporation of the urease nickel metallocenter. In Brucella anthropi (strain ATCC 49188 / DSM 6882 / CCUG 24695 / JCM 21032 / LMG 3331 / NBRC 15819 / NCTC 12168 / Alc 37) (Ochrobactrum anthropi), this protein is Urease accessory protein UreF 2.